We begin with the raw amino-acid sequence, 134 residues long: Small ribosomal subunit protein bS16 (134 aa).

The tract at residues 105–134 (EAERRQKRLTAKTRRRQAKKAAEAAGSAEG) is disordered. A compositionally biased stretch (basic residues) spans 109 to 123 (RQKRLTAKTRRRQAK).

The protein belongs to the bacterial ribosomal protein bS16 family.

The protein is Small ribosomal subunit protein bS16 of Chlorobaculum parvum (strain DSM 263 / NCIMB 8327) (Chlorobium vibrioforme subsp. thiosulfatophilum).